The sequence spans 546 residues: Mercuric reductase (546 aa).

An HMA domain is found at 2–66; the sequence is NKFKVNISGM…AIDEANYQAG (65 aa). 2 residues coordinate a metal cation: Cys13 and Cys16. FAD contacts are provided by Ala96, Gly116, and Thr121. Cys122 and Cys127 are joined by a disulfide. FAD contacts are provided by Lys131 and Ala195. NAD(+) contacts are provided by residues 256-263 and Gly346; that span reads GSGYIGME. The FAD site is built by Asp387 and Val395. Positions 543 and 544 each coordinate Hg(2+).

Belongs to the class-I pyridine nucleotide-disulfide oxidoreductase family. Homodimer. Requires FAD as cofactor.

The catalysed reaction is Hg + NADP(+) + H(+) = Hg(2+) + NADPH. Its activity is regulated as follows. Uses NADPH as the preferred electron donor, but shows slight activity with NADH as well. Inhibited by Cu(2+), Cd(2+), Zn(2+) and Co(2+), with Cu(2+) showing the strongest inhibition. Enzyme activity is enhanced by b-mercaptoethanol and NaCl up to concentrations of 500 uM and 100 mM respectively, followed by inhibition at higher concentrations. In terms of biological role, resistance to Hg(2+) in bacteria appears to be governed by a specialized system which includes mercuric reductase. MerA protein is responsible for volatilizing mercury as Hg(0). Catalyzes reduction of Hg(2+) to elemental Hg, which is volatile and can diffuse out of cells passively. Plays a pivotal role in mercury resistance and cell protection. The chain is Mercuric reductase from Lysinibacillus sphaericus (Bacillus sphaericus).